The primary structure comprises 89 residues: Small ribosomal subunit protein uS15 (89 aa).

It belongs to the universal ribosomal protein uS15 family. Part of the 30S ribosomal subunit. Forms a bridge to the 50S subunit in the 70S ribosome, contacting the 23S rRNA.

Functionally, one of the primary rRNA binding proteins, it binds directly to 16S rRNA where it helps nucleate assembly of the platform of the 30S subunit by binding and bridging several RNA helices of the 16S rRNA. Forms an intersubunit bridge (bridge B4) with the 23S rRNA of the 50S subunit in the ribosome. In Buchnera aphidicola subsp. Baizongia pistaciae (strain Bp), this protein is Small ribosomal subunit protein uS15.